Here is a 255-residue protein sequence, read N- to C-terminus: MEALLVLPLLLLLSAGPCAPQLLGIRGDALEKSCLQLPLDCDDIYAQGYQADGVYLIYPSGPSVPVPVFCDMTTEGGKWTVFQKRFNGSVSFFRGWNDYKLGFGRADGEYWLGLQNMHLLTLKQKYELRVDLEDFENNTAFAKYADFSISPNAVSAEEDGYTLYVSGFEDGGAGDSLTYHSGQKFSTFDRDQDLFVQNCAALSSGAFWFRSCHFANLNGFYLGGSHLSYANGINWAQWKGFYYSLKRTEMKIRRA.

The first 20 residues, 1 to 20, serve as a signal peptide directing secretion; the sequence is MEALLVLPLLLLLSAGPCAP. Residues 26–28 carry the Cell attachment site motif; the sequence is RGD. The region spanning 32 to 255 is the Fibrinogen C-terminal domain; it reads KSCLQLPLDC…KRTEMKIRRA (224 aa). N-linked (GlcNAc...) asparagine glycans are attached at residues Asn-87 and Asn-137.

As to quaternary structure, homodimer. Can also form higher oligomers. Interacts with FBN1, FBN2 and LOX. Interacts with COL1A1 in a Ca (2+)-dependent manner. Interacts with ELN in a Ca (2+)-dependent manner; this interaction promotes ELN self-assembly.

The protein localises to the secreted. It localises to the extracellular space. Its subcellular location is the extracellular matrix. Its function is as follows. Could be involved in calcium-dependent cell adhesion or intercellular interactions. May contribute to the elastic fiber assembly and/or maintenance. This chain is Microfibril-associated glycoprotein 4 (MFAP4), found in Bos taurus (Bovine).